A 319-amino-acid chain; its full sequence is Methionyl-tRNA formyltransferase (319 aa).

113 to 116 contacts (6S)-5,6,7,8-tetrahydrofolate; the sequence is SLLP.

The protein belongs to the Fmt family.

The enzyme catalyses L-methionyl-tRNA(fMet) + (6R)-10-formyltetrahydrofolate = N-formyl-L-methionyl-tRNA(fMet) + (6S)-5,6,7,8-tetrahydrofolate + H(+). In terms of biological role, attaches a formyl group to the free amino group of methionyl-tRNA(fMet). The formyl group appears to play a dual role in the initiator identity of N-formylmethionyl-tRNA by promoting its recognition by IF2 and preventing the misappropriation of this tRNA by the elongation apparatus. This is Methionyl-tRNA formyltransferase from Pseudomonas fluorescens (strain ATCC BAA-477 / NRRL B-23932 / Pf-5).